The following is a 488-amino-acid chain: Malonate-semialdehyde dehydrogenase (488 aa).

NAD(+) contacts are provided by A150, F152, K176, E179, R180, S229, and T251. C284 functions as the Nucleophile in the catalytic mechanism. E382 contacts NAD(+).

Belongs to the aldehyde dehydrogenase family. IolA subfamily. As to quaternary structure, homotetramer.

The enzyme catalyses 3-oxopropanoate + NAD(+) + CoA + H2O = hydrogencarbonate + acetyl-CoA + NADH + H(+). It carries out the reaction 2-methyl-3-oxopropanoate + NAD(+) + CoA + H2O = propanoyl-CoA + hydrogencarbonate + NADH + H(+). It functions in the pathway polyol metabolism; myo-inositol degradation into acetyl-CoA; acetyl-CoA from myo-inositol: step 7/7. Catalyzes the oxidation of malonate semialdehyde (MSA) and methylmalonate semialdehyde (MMSA) into acetyl-CoA and propanoyl-CoA, respectively. Is involved in a myo-inositol catabolic pathway. Bicarbonate, and not CO2, is the end-product of the enzymatic reaction. In Listeria monocytogenes serotype 4a (strain HCC23), this protein is Malonate-semialdehyde dehydrogenase.